We begin with the raw amino-acid sequence, 384 residues long: Chaperone protein DnaJ (384 aa).

A J domain is found at 5 to 70 (DFYEVLGVSK…DKKAAYDRYG (66 aa)). The CR-type zinc-finger motif lies at 143–221 (GAQKTITVPG…CHGSGRIEKE (79 aa)). Cys-156, Cys-159, Cys-173, Cys-176, Cys-195, Cys-198, Cys-209, and Cys-212 together coordinate Zn(2+). CXXCXGXG motif repeat units lie at residues 156 to 163 (CGSCNGTG), 173 to 180 (CPTCSGLG), 195 to 202 (CPTCGGQG), and 209 to 216 (CRVCHGSG).

It belongs to the DnaJ family. As to quaternary structure, homodimer. The cofactor is Zn(2+).

The protein localises to the cytoplasm. Participates actively in the response to hyperosmotic and heat shock by preventing the aggregation of stress-denatured proteins and by disaggregating proteins, also in an autonomous, DnaK-independent fashion. Unfolded proteins bind initially to DnaJ; upon interaction with the DnaJ-bound protein, DnaK hydrolyzes its bound ATP, resulting in the formation of a stable complex. GrpE releases ADP from DnaK; ATP binding to DnaK triggers the release of the substrate protein, thus completing the reaction cycle. Several rounds of ATP-dependent interactions between DnaJ, DnaK and GrpE are required for fully efficient folding. Also involved, together with DnaK and GrpE, in the DNA replication of plasmids through activation of initiation proteins. This is Chaperone protein DnaJ from Rhodobacter capsulatus (Rhodopseudomonas capsulata).